We begin with the raw amino-acid sequence, 210 residues long: Fibrillarin-like rRNA/tRNA 2'-O-methyltransferase (210 aa).

Residues 70-71 (TT), 88-89 (EY), 113-114 (DA), and 133-136 (DIAQ) each bind S-adenosyl-L-methionine.

It belongs to the methyltransferase superfamily. Fibrillarin family. Interacts with nop5. Component of box C/D small ribonucleoprotein (sRNP) particles that contain rpl7ae, FlpA and nop5, plus a guide RNA.

Its function is as follows. Involved in pre-rRNA and tRNA processing. Utilizes the methyl donor S-adenosyl-L-methionine to catalyze the site-specific 2'-hydroxyl methylation of ribose moieties in rRNA and tRNA. Site specificity is provided by a guide RNA that base pairs with the substrate. Methylation occurs at a characteristic distance from the sequence involved in base pairing with the guide RNA. The protein is Fibrillarin-like rRNA/tRNA 2'-O-methyltransferase of Archaeoglobus fulgidus (strain ATCC 49558 / DSM 4304 / JCM 9628 / NBRC 100126 / VC-16).